The chain runs to 629 residues: tRNA uridine 5-carboxymethylaminomethyl modification enzyme MnmG (629 aa).

Residues Gly13–Gly18, Val125, and Ser180 each bind FAD. Gly273–Phe287 is a binding site for NAD(+). FAD is bound at residue Gln370.

It belongs to the MnmG family. In terms of assembly, homodimer. Heterotetramer of two MnmE and two MnmG subunits. FAD is required as a cofactor.

The protein localises to the cytoplasm. Its function is as follows. NAD-binding protein involved in the addition of a carboxymethylaminomethyl (cmnm) group at the wobble position (U34) of certain tRNAs, forming tRNA-cmnm(5)s(2)U34. The chain is tRNA uridine 5-carboxymethylaminomethyl modification enzyme MnmG from Photobacterium profundum (strain SS9).